Here is a 261-residue protein sequence, read N- to C-terminus: MADINDPVLAKPADLCCLKGDFHRGEPTGSIIQIEGVDTYVAKPDPKFTNGNVLLFFPDAFGLHINSKLMMDAYAACGYLTLGVDYFLGDAVTKYSASPLNDPNFDLAAWSAKHLLPSEEIAREWVKNIKAKYGNDGKVKFGCIGYCWGARIVLQQLSDGGICSAGAIAHPSFVNESHVQKSKAPVAFSVPATDKLFSNEARTRVIEICTEKQQRFNMQVFSHVGHGFASRTRLTDPYELWAKEQHFKGFIEWLDFWLARE.

Catalysis depends on residues Cys147, Asp194, and His226.

This sequence belongs to the dienelactone hydrolase family.

Its pathway is xenobiotic degradation. Dienlactone hydrolase; part of the Fusarium detoxification of benzoxazolinone cluster 1 (FDB1) involved in the degradation of benzoxazolinones produced by the host plant. Maize, wheat, and rye produce the 2 benzoxazinone phytoanticipins 2,4-dihy-droxy-7-methoxy-1,4-benzoxazin-3-one (DIMBOA) and 2,4-dihydroxy-1,4-benzoxazin-3-one (DIBOA) that, due to their inherent instability once released, spontaneously degrade to the more stable corresponding benzoxazolinones, 6-methoxy-2-benzoxazolinone (MBOA) and 2-benzoxazolinone (BOA), respectively. The first step in the detoxification of benzoxazolinones involves the hydrolysis of the cyclic ester bond of benzoxazolinones by the FDB1 cluster gamma-lactamase MBL1 to aminophenols. MBL1 is able to convert BOA into 2-aminophenol (2-AP), as well as MBOA into 5-methoxy-2-aminophenol (2-AMP). The FDB2 cluster N-malonyltransferase FDB2/NAT1 then metabolizes aminophenols via N-malonylation to non-toxic malonamic acids. FDB2/NAT1 converts 2-AP into N-(2-hydroxyphenyl) malonamic acid (HPMA) and 2-AMP into N-(2-hydroxy-4-methoxyphenyl) malonamic acid (HMPMA). The duplicated dienlactone hydrolases DLH1 and DLH2 may provide redundant function for hydrolyzing the lactone moiety in the BOA molecule. The roles of the amidases and other enzymes encoded by the 2 FDB clusters have not been identified so far. This chain is Dienlactone hydrolase 1, found in Gibberella moniliformis (strain M3125 / FGSC 7600) (Maize ear and stalk rot fungus).